A 537-amino-acid polypeptide reads, in one-letter code: CTP synthase (537 aa).

Residues Met-1–Leu-268 are amidoligase domain. Ser-14 is a CTP binding site. Position 14 (Ser-14) interacts with UTP. Ser-15–Leu-20 is an ATP binding site. An L-glutamine-binding site is contributed by Tyr-55. Asp-72 serves as a coordination point for ATP. Residues Asp-72 and Glu-142 each contribute to the Mg(2+) site. CTP is bound by residues Asp-149–Glu-151, Lys-188–Gln-193, and Lys-224. Residues Lys-188–Gln-193 and Lys-224 contribute to the UTP site. The region spanning Arg-294–Asn-533 is the Glutamine amidotransferase type-1 domain. Gly-353 serves as a coordination point for L-glutamine. Cys-380 (nucleophile; for glutamine hydrolysis) is an active-site residue. L-glutamine is bound by residues Leu-381–Gln-384, Glu-404, and Arg-461. Active-site residues include His-506 and Glu-508.

It belongs to the CTP synthase family. Homotetramer.

The catalysed reaction is UTP + L-glutamine + ATP + H2O = CTP + L-glutamate + ADP + phosphate + 2 H(+). The enzyme catalyses L-glutamine + H2O = L-glutamate + NH4(+). It carries out the reaction UTP + NH4(+) + ATP = CTP + ADP + phosphate + 2 H(+). The protein operates within pyrimidine metabolism; CTP biosynthesis via de novo pathway; CTP from UDP: step 2/2. With respect to regulation, allosterically activated by GTP, when glutamine is the substrate; GTP has no effect on the reaction when ammonia is the substrate. The allosteric effector GTP functions by stabilizing the protein conformation that binds the tetrahedral intermediate(s) formed during glutamine hydrolysis. Inhibited by the product CTP, via allosteric rather than competitive inhibition. Its function is as follows. Catalyzes the ATP-dependent amination of UTP to CTP with either L-glutamine or ammonia as the source of nitrogen. Regulates intracellular CTP levels through interactions with the four ribonucleotide triphosphates. The protein is CTP synthase of Chlamydia caviae (strain ATCC VR-813 / DSM 19441 / 03DC25 / GPIC) (Chlamydophila caviae).